The sequence spans 602 residues: ATP-dependent lipid A-core flippase 1 (602 aa).

The next 5 helical transmembrane spans lie at 36-56 (LGFVAAIIGMLGYAAIDVYFL), 80-100 (LFIIVAFTVRGIAHFIANYCL), 154-174 (ILTIVQQSAFIIGLLGLMFYY), 176-196 (WQLSLIFLLITPIIAVIVSVV), and 261-281 (ASVPIIQVIASFALAFVFYAI). An ABC transmembrane type-1 domain is found at 39–321 (VAAIIGMLGY…LTNVNSEFQQ (283 aa)). Residues 362–599 (YKNTNTMTTS…QGAYAQLHSF (238 aa)) enclose the ABC transporter domain. 398–405 (GRSGSGKS) contributes to the ATP binding site.

This sequence belongs to the ABC transporter superfamily. Lipid exporter (TC 3.A.1.106) family. Homodimer.

It localises to the cell inner membrane. The catalysed reaction is ATP + H2O + lipid A-core oligosaccharideSide 1 = ADP + phosphate + lipid A-core oligosaccharideSide 2.. In terms of biological role, involved in lipopolysaccharide (LPS) biosynthesis. Translocates lipid A-core from the inner to the outer leaflet of the inner membrane. Transmembrane domains (TMD) form a pore in the inner membrane and the ATP-binding domain (NBD) is responsible for energy generation. This chain is ATP-dependent lipid A-core flippase 1, found in Colwellia psychrerythraea (strain 34H / ATCC BAA-681) (Vibrio psychroerythus).